Consider the following 288-residue polypeptide: Pyridoxal kinase PdxY (288 aa).

Substrate contacts are provided by residues serine 10 and 45–46 (TQ). Residues aspartate 112, alanine 143, glutamate 148, and lysine 181 each coordinate ATP. Aspartate 222 contacts substrate.

It belongs to the pyridoxine kinase family. PdxY subfamily. In terms of assembly, homodimer. Requires Mg(2+) as cofactor.

The enzyme catalyses pyridoxal + ATP = pyridoxal 5'-phosphate + ADP + H(+). Its pathway is cofactor metabolism; pyridoxal 5'-phosphate salvage; pyridoxal 5'-phosphate from pyridoxal: step 1/1. Functionally, pyridoxal kinase involved in the salvage pathway of pyridoxal 5'-phosphate (PLP). Catalyzes the phosphorylation of pyridoxal to PLP. The polypeptide is Pyridoxal kinase PdxY (Paraburkholderia xenovorans (strain LB400)).